The primary structure comprises 64 residues: Large ribosomal subunit protein bL35 (64 aa).

Residues 1-14 show a composition bias toward basic residues; the sequence is MKQKTHKGTAKRVK. The interval 1 to 50 is disordered; that stretch reads MKQKTHKGTAKRVKITGSGKLRREQANRRHLLEGKPSKRTRRLKGTEDVA. The segment covering 21–36 has biased composition (basic and acidic residues); sequence LRREQANRRHLLEGKP.

This sequence belongs to the bacterial ribosomal protein bL35 family.

This chain is Large ribosomal subunit protein bL35, found in Corynebacterium diphtheriae (strain ATCC 700971 / NCTC 13129 / Biotype gravis).